The primary structure comprises 23 residues: Ascaphin-1 (23 aa).

Asn-23 carries the asparagine amide modification.

Expressed by the skin glands.

The protein resides in the secreted. Functionally, antimicrobial peptide that shows higher potency against Gram-negative bacteria than against Gram-positive bacteria. Has a very week hemolytic activity. This is Ascaphin-1 from Ascaphus truei (Coastal tailed frog).